Consider the following 297-residue polypeptide: Aspartate carbamoyltransferase catalytic subunit (297 aa).

Residues Arg-52 and Thr-53 each coordinate carbamoyl phosphate. Lys-80 lines the L-aspartate pocket. Residues Arg-102, His-130, and Gln-133 each coordinate carbamoyl phosphate. L-aspartate is bound by residues Arg-167 and Arg-217. Residues Gly-256 and Pro-257 each contribute to the carbamoyl phosphate site.

The protein belongs to the aspartate/ornithine carbamoyltransferase superfamily. ATCase family. As to quaternary structure, heterododecamer (2C3:3R2) of six catalytic PyrB chains organized as two trimers (C3), and six regulatory PyrI chains organized as three dimers (R2).

The enzyme catalyses carbamoyl phosphate + L-aspartate = N-carbamoyl-L-aspartate + phosphate + H(+). Its pathway is pyrimidine metabolism; UMP biosynthesis via de novo pathway; (S)-dihydroorotate from bicarbonate: step 2/3. Catalyzes the condensation of carbamoyl phosphate and aspartate to form carbamoyl aspartate and inorganic phosphate, the committed step in the de novo pyrimidine nucleotide biosynthesis pathway. The polypeptide is Aspartate carbamoyltransferase catalytic subunit (Helicobacter hepaticus (strain ATCC 51449 / 3B1)).